A 261-amino-acid chain; its full sequence is uncharacterized protein (261 aa).

A divalent metal cation is bound by residues Asp43, His45, Asp75, Asn106, His197, and His199.

Belongs to the metallophosphoesterase superfamily. The cofactor is a divalent metal cation.

This is an uncharacterized protein from Aquifex aeolicus (strain VF5).